Reading from the N-terminus, the 321-residue chain is Cathepsin O (321 aa).

Positions 1 to 23 (MDVRALPWLPWLLWLLCRGGGDA) are cleaved as a signal peptide. Positions 24–107 (DSRAPFTPTW…EVHMSIPNVS (84 aa)) are cleaved as a propeptide — activation peptide. Asn-62 and Asn-105 each carry an N-linked (GlcNAc...) asparagine glycan. 3 cysteine pairs are disulfide-bonded: Cys-129/Cys-170, Cys-163/Cys-204, and Cys-262/Cys-310. Cys-132 is an active-site residue. Residues His-269 and Asn-289 contribute to the active site.

It belongs to the peptidase C1 family. As to expression, expressed in all tissues examined. High levels seen in the ovary, kidney and placenta while low levels seen in thymus and skeletal muscle.

It localises to the lysosome. It catalyses the reaction The recombinant human enzyme hydrolyzes synthetic endopeptidase substrates including Z-Phe-Arg-NHMec and Z-Arg-Arg-NHMec.. In terms of biological role, proteolytic enzyme possibly involved in normal cellular protein degradation and turnover. This is Cathepsin O (CTSO) from Homo sapiens (Human).